Consider the following 217-residue polypeptide: Thiamine-phosphate synthase (217 aa).

Residues 37–41 and N72 contribute to the 4-amino-2-methyl-5-(diphosphooxymethyl)pyrimidine site; that span reads QFREK. D73 and D92 together coordinate Mg(2+). A 4-amino-2-methyl-5-(diphosphooxymethyl)pyrimidine-binding site is contributed by S110. A 2-[(2R,5Z)-2-carboxy-4-methylthiazol-5(2H)-ylidene]ethyl phosphate-binding site is contributed by 136 to 138; that stretch reads TVS. K139 contacts 4-amino-2-methyl-5-(diphosphooxymethyl)pyrimidine. Residues G168 and 188–189 each bind 2-[(2R,5Z)-2-carboxy-4-methylthiazol-5(2H)-ylidene]ethyl phosphate; that span reads IS.

Belongs to the thiamine-phosphate synthase family. It depends on Mg(2+) as a cofactor.

It carries out the reaction 2-[(2R,5Z)-2-carboxy-4-methylthiazol-5(2H)-ylidene]ethyl phosphate + 4-amino-2-methyl-5-(diphosphooxymethyl)pyrimidine + 2 H(+) = thiamine phosphate + CO2 + diphosphate. The enzyme catalyses 2-(2-carboxy-4-methylthiazol-5-yl)ethyl phosphate + 4-amino-2-methyl-5-(diphosphooxymethyl)pyrimidine + 2 H(+) = thiamine phosphate + CO2 + diphosphate. It catalyses the reaction 4-methyl-5-(2-phosphooxyethyl)-thiazole + 4-amino-2-methyl-5-(diphosphooxymethyl)pyrimidine + H(+) = thiamine phosphate + diphosphate. Its pathway is cofactor biosynthesis; thiamine diphosphate biosynthesis; thiamine phosphate from 4-amino-2-methyl-5-diphosphomethylpyrimidine and 4-methyl-5-(2-phosphoethyl)-thiazole: step 1/1. Its function is as follows. Condenses 4-methyl-5-(beta-hydroxyethyl)thiazole monophosphate (THZ-P) and 2-methyl-4-amino-5-hydroxymethyl pyrimidine pyrophosphate (HMP-PP) to form thiamine monophosphate (TMP). This Anoxybacillus flavithermus (strain DSM 21510 / WK1) protein is Thiamine-phosphate synthase.